Consider the following 363-residue polypeptide: Peroxidase (363 aa).

The N-terminal stretch at 1–20 (MKLSLLSTFAAVIIGALALP) is a signal peptide. Gln21 carries the pyrrolidone carboxylic acid modification. 4 disulfide bridges follow: Cys31–Cys43, Cys42–Cys312, Cys62–Cys148, and Cys276–Cys341. The active-site Proton acceptor is the His75. Residues Asp76, Gly94, Asp96, and Ser98 each coordinate Ca(2+). Asn162 is a glycosylation site (N-linked (GlcNAc...) (high mannose) asparagine). His203 lines the heme b pocket. Positions 204, 221, 223, 226, and 228 each coordinate Ca(2+). The O-linked (Man...) serine glycan is linked to Ser358.

It belongs to the peroxidase family. Ligninase subfamily. Ca(2+) is required as a cofactor. Heme b serves as cofactor.

The protein localises to the secreted. It carries out the reaction 2 a phenolic donor + H2O2 = 2 a phenolic radical donor + 2 H2O. The protein is Peroxidase (CIP1) of Coprinopsis cinerea (strain Okayama-7 / 130 / ATCC MYA-4618 / FGSC 9003) (Inky cap fungus).